Reading from the N-terminus, the 497-residue chain is Probable cytosol aminopeptidase (497 aa).

Mn(2+) contacts are provided by K267 and D272. K279 is a catalytic residue. Positions 290, 349, and 351 each coordinate Mn(2+). R353 is a catalytic residue.

The protein belongs to the peptidase M17 family. It depends on Mn(2+) as a cofactor.

The protein localises to the cytoplasm. It catalyses the reaction Release of an N-terminal amino acid, Xaa-|-Yaa-, in which Xaa is preferably Leu, but may be other amino acids including Pro although not Arg or Lys, and Yaa may be Pro. Amino acid amides and methyl esters are also readily hydrolyzed, but rates on arylamides are exceedingly low.. It carries out the reaction Release of an N-terminal amino acid, preferentially leucine, but not glutamic or aspartic acids.. Presumably involved in the processing and regular turnover of intracellular proteins. Catalyzes the removal of unsubstituted N-terminal amino acids from various peptides. This is Probable cytosol aminopeptidase from Pseudomonas putida (strain W619).